Consider the following 515-residue polypeptide: 2-isopropylmalate synthase (515 aa).

The Pyruvate carboxyltransferase domain maps to 5-267 (VIIFDTTLRD…HTSLKNDEIH (263 aa)). Mn(2+)-binding residues include Asp14, His202, His204, and Asn238. The interval 392 to 515 (KLNYLSVQSG…EIKQNKITTV (124 aa)) is regulatory domain.

It belongs to the alpha-IPM synthase/homocitrate synthase family. LeuA type 1 subfamily. In terms of assembly, homodimer. Mn(2+) is required as a cofactor.

It localises to the cytoplasm. The catalysed reaction is 3-methyl-2-oxobutanoate + acetyl-CoA + H2O = (2S)-2-isopropylmalate + CoA + H(+). Its pathway is amino-acid biosynthesis; L-leucine biosynthesis; L-leucine from 3-methyl-2-oxobutanoate: step 1/4. Its function is as follows. Catalyzes the condensation of the acetyl group of acetyl-CoA with 3-methyl-2-oxobutanoate (2-ketoisovalerate) to form 3-carboxy-3-hydroxy-4-methylpentanoate (2-isopropylmalate). This is 2-isopropylmalate synthase from Aliivibrio salmonicida (strain LFI1238) (Vibrio salmonicida (strain LFI1238)).